An 864-amino-acid chain; its full sequence is Structure-specific endonuclease subunit SLX4 (864 aa).

Disordered regions lie at residues 1–21 (MTTQ…PVIP), 49–69 (LSTS…KTQG), 91–113 (TGTG…PGNA), 161–190 (ANQT…GNDH), 289–318 (LSDD…NRPK), 346–385 (TLLS…NEPP), 413–433 (ANGH…ISNS), and 625–767 (KAPN…VTSS). Over residues 295 to 306 (SSITEDSESATS) the composition is skewed to polar residues. The span at 307 to 318 (KPRRVKAKNRPK) shows a compositional bias: basic residues. Residues 656 to 668 (QPNSISQKATTQV) are compositionally biased toward polar residues. Positions 685–695 (VSSRRSTSTSK) are enriched in low complexity. Residues 743 to 767 (PESFNLPTTPLTIRSGKVPSTVTSS) are compositionally biased toward polar residues.

This sequence belongs to the SLX4 family. As to quaternary structure, forms a heterodimer with SLX1. Post-translationally, phosphorylated in response to DNA damage.

The protein localises to the nucleus. Functionally, regulatory subunit of the SLX1-SLX4 structure-specific endonuclease that resolves DNA secondary structures generated during DNA repair and recombination. Has endonuclease activity towards branched DNA substrates, introducing single-strand cuts in duplex DNA close to junctions with ss-DNA. The polypeptide is Structure-specific endonuclease subunit SLX4 (Paracoccidioides lutzii (strain ATCC MYA-826 / Pb01) (Paracoccidioides brasiliensis)).